The chain runs to 405 residues: MDINKPGWNQSDQQATAYDPNQQQYYGDGSTYYDPDQAVDPNQAYYPDPNTYPDAAAYYGYGQDGQAYPQDYAQDPNQAYYADPNAYQDPNAYTDPNAYVDPNAYQDPNAYVDPNNYTDPNAYYGYGQDGQAYPQDYAQDPNQAYYADPNAYQDPNAYTDPYYVTSTDPNAYYGQVDNVPALEASDLAYEVTPQEQAAEQELFSEPETKVIREIHEFPFEKIRSYFQTDFDSYNSRLTQLKDKLDNAIFSMRKAIDTVKENSANLQIMKQNFERQLKEQQTQRLTSNTDAEKIGAKINQLEERMQRLSRTMESVEWTKKEPRQEQFDPRFVDPRNFNNYVNNTDTMMSMFEKVLMMNLLRSTTPVQPPVQYFTPQPLTASPRPVYEEPISASFRRRGYRGDEFYE.

Residues 1 to 58 form a disordered region; that stretch reads MDINKPGWNQSDQQATAYDPNQQQYYGDGSTYYDPDQAVDPNQAYYPDPNTYPDAAAY. Positions 7–25 are enriched in polar residues; it reads GWNQSDQQATAYDPNQQQY. Repeat copies occupy residues 40 to 45, 75 to 80, 83 to 87, 89 to 93, 95 to 99, 101 to 105, 107 to 111, 119 to 123, 140 to 145, 148 to 152, 154 to 158, and 168 to 172. The tract at residues 40–172 is 12 X 5 AA repeats of D-P-N-Q-A-Y; the sequence is DPNQAYYPDP…YVTSTDPNAY (133 aa).

The N-terminus is blocked.

Its subcellular location is the cell membrane. This is Proline-rich P65 protein (p65) from Mycoplasma pneumoniae (strain ATCC 29342 / M129 / Subtype 1) (Mycoplasmoides pneumoniae).